A 595-amino-acid polypeptide reads, in one-letter code: Coronatine-insensitive protein homolog 1a (595 aa).

The F-box domain maps to 20 to 62; sequence WVPDEALHLVMGHVEDPRDREAASRVCRRWHRIDALTRKHVTV. 5 residues coordinate jasmonate: R90, R351, Y389, R412, and R499.

As to quaternary structure, interacts with TIFY6A/JAZ3, TIFY6B/JAZ4 and TIFY11D/JAZ12 in a coronatine-dependent manner. Interacts with TIFY9/JAZ5, TIFY10A/JAZ6, TIFY10B/JAZ7, TIFY11A/JAZ9 and TIFY11C/JAZ11 in a coronatine-dependent manner.

Its function is as follows. Involved in jasmonate (JA) signaling. Required for jasmonate signaling in plant defense responses. Can complement Arabidopsis coi1-1 mutant and restore jasmonate signaling. Required for JA-regulated defense responses to infestation by the leaffolder Cnaphalocrocis medinalis. May act on an initial response of jasmonate-regulated gene expression toward drought tolerance as part of a BHLH148-TIFY11D/JAZ12-COI1A complex. Component of SCF(COI1) E3 ubiquitin ligase complexes, which may mediate the ubiquitination and subsequent proteasomal degradation of target proteins, including TIFY/JAZ family. The polypeptide is Coronatine-insensitive protein homolog 1a (Oryza sativa subsp. indica (Rice)).